The primary structure comprises 248 residues: Aliphatic sulfonates import ATP-binding protein SsuB 2 (248 aa).

The region spanning 14–230 (VRVESLVRSF…DHGHRRFGEI (217 aa)) is the ABC transporter domain. Position 46–53 (46–53 (GRSGSGKS)) interacts with ATP.

This sequence belongs to the ABC transporter superfamily. Aliphatic sulfonates importer (TC 3.A.1.17.2) family. The complex is composed of two ATP-binding proteins (SsuB), two transmembrane proteins (SsuC) and a solute-binding protein (SsuA).

The protein resides in the cell inner membrane. The catalysed reaction is ATP + H2O + aliphatic sulfonate-[sulfonate-binding protein]Side 1 = ADP + phosphate + aliphatic sulfonateSide 2 + [sulfonate-binding protein]Side 1.. Its function is as follows. Part of the ABC transporter complex SsuABC involved in aliphatic sulfonates import. Responsible for energy coupling to the transport system. This is Aliphatic sulfonates import ATP-binding protein SsuB 2 from Mesorhizobium japonicum (strain LMG 29417 / CECT 9101 / MAFF 303099) (Mesorhizobium loti (strain MAFF 303099)).